The chain runs to 113 residues: FK506-binding protein 1B (113 aa).

The 95-residue stretch at 19–113 (GQTVVIEYTG…IFDVYLKGLQ (95 aa)) folds into the PPIase FKBP-type domain.

Belongs to the FKBP-type PPIase family. FKBP1 subfamily.

Its subcellular location is the cytoplasm. The enzyme catalyses [protein]-peptidylproline (omega=180) = [protein]-peptidylproline (omega=0). With respect to regulation, inhibited by both FK506 and rapamycin. In terms of biological role, PPIases accelerate the folding of proteins. It catalyzes the cis-trans isomerization of proline imidic peptide bonds in oligopeptides. This is FK506-binding protein 1B (fkr-3) from Neurospora crassa (strain ATCC 24698 / 74-OR23-1A / CBS 708.71 / DSM 1257 / FGSC 987).